A 1055-amino-acid chain; its full sequence is TNF receptor-associated factor homolog 1a (1055 aa).

A disordered region spans residues 1 to 56 (MSESTNEDSGAGRSSLEENSNGQRSQSEEAIAEWRSSEQVENGTPSTSPPYWDIDD). Polar residues predominate over residues 37-46 (SEQVENGTPS). Residues 68-191 (FGKNTWTIEK…SGCLTIKAQV (124 aa)) form the MATH domain. 4 disordered regions span residues 352 to 380 (PKKEEKSSQNRTKDGNAGEEFSREAVERD), 431 to 590 (AESE…NGSY), 603 to 772 (FSNG…APII), and 820 to 845 (VGSSGFTHPSSQSSGTSTLPPYSHPS). The span at 433-446 (SEQKGKRGASEKEK) shows a compositional bias: basic and acidic residues. Residues 441-496 (ASEKEKKSKKKQAKQKKNKNKGKEMRKEDKVRTQTEEREIEKEECVRAIAESSAEK) adopt a coiled-coil conformation. Residues 447–460 (KSKKKQAKQKKNKN) show a composition bias toward basic residues. Positions 461–486 (KGKEMRKEDKVRTQTEEREIEKEECV) are enriched in basic and acidic residues. Low complexity predominate over residues 502–513 (DVSDVSDSVDSS). Residues 524 to 537 (RESSPVHWEMDASE) show a composition bias toward basic and acidic residues. Polar residues predominate over residues 569-586 (MDDSSSTCSNDSIQSGVA). The span at 657 to 668 (QKPESPKERSPV) shows a compositional bias: basic and acidic residues. 2 stretches are compositionally biased toward polar residues: residues 723 to 740 (KSPSSHHASPSREAQLQT) and 823 to 845 (SGFTHPSSQSSGTSTLPPYSHPS).

In terms of assembly, interacts with AHK3. Interacts with ATG6, SINAT1, SINAT2, SINAT5 and SINAT6.

The protein localises to the cytoplasm. Functionally, functions redundantly with TRAF1B in the regulation of plant immune response. Contributes to the turnover of the nucleotide-binding domain and leucine-rich repeat-containing (NB-LRR) immune receptors SNC1 and RPS2. May associate with an E3 ubiquitin-protein ligase complex, which modulates ubiquitination and subsequent degradation of NB-LRR immune sensors to maintain their homeostasis. Functions redundantly with TRAF1B in the regulation of autophagosome formation. Required for SINAT1- and SINAT2-mediated ubiquitination and destabilization of ATG6. Functions as a molecular adapter that helps to regulate autophagy by modulating ATG6 stability. This Arabidopsis thaliana (Mouse-ear cress) protein is TNF receptor-associated factor homolog 1a.